Reading from the N-terminus, the 321-residue chain is Methionyl-tRNA formyltransferase (321 aa).

113 to 116 contributes to the (6S)-5,6,7,8-tetrahydrofolate binding site; that stretch reads SILP.

The protein belongs to the Fmt family.

The enzyme catalyses L-methionyl-tRNA(fMet) + (6R)-10-formyltetrahydrofolate = N-formyl-L-methionyl-tRNA(fMet) + (6S)-5,6,7,8-tetrahydrofolate + H(+). Its function is as follows. Attaches a formyl group to the free amino group of methionyl-tRNA(fMet). The formyl group appears to play a dual role in the initiator identity of N-formylmethionyl-tRNA by promoting its recognition by IF2 and preventing the misappropriation of this tRNA by the elongation apparatus. This chain is Methionyl-tRNA formyltransferase, found in Vibrio atlanticus (strain LGP32) (Vibrio splendidus (strain Mel32)).